The sequence spans 165 residues: Small ribosomal subunit protein uS5 (165 aa).

The S5 DRBM domain occupies 10-73 (LVEKLVAVDR…EAARRNMITV (64 aa)).

The protein belongs to the universal ribosomal protein uS5 family. In terms of assembly, part of the 30S ribosomal subunit. Contacts proteins S4 and S8.

With S4 and S12 plays an important role in translational accuracy. In terms of biological role, located at the back of the 30S subunit body where it stabilizes the conformation of the head with respect to the body. In Acinetobacter baumannii (strain AB307-0294), this protein is Small ribosomal subunit protein uS5.